The chain runs to 634 residues: DNA-directed RNA polymerase subunit gamma (634 aa).

Zn(2+)-binding residues include cysteine 74, cysteine 76, cysteine 89, and cysteine 92. Mg(2+) contacts are provided by aspartate 471, aspartate 473, and aspartate 475.

It belongs to the RNA polymerase beta' chain family. RpoC1 subfamily. In cyanobacteria the RNAP catalytic core is composed of 2 alpha, 1 beta, 1 beta', 1 gamma and 1 omega subunit. When a sigma factor is associated with the core the holoenzyme is formed, which can initiate transcription. Requires Mg(2+) as cofactor. The cofactor is Zn(2+).

The catalysed reaction is RNA(n) + a ribonucleoside 5'-triphosphate = RNA(n+1) + diphosphate. Its function is as follows. DNA-dependent RNA polymerase catalyzes the transcription of DNA into RNA using the four ribonucleoside triphosphates as substrates. The polypeptide is DNA-directed RNA polymerase subunit gamma (Prochlorococcus marinus (strain AS9601)).